The chain runs to 333 residues: MASDNTHRSYSIIPCFIFVELVIMAGTVLLAYYFECTDTFGIHIQGFFCNDADLLKPYPGPEESSFIQPLILYCVVAAAPTAIIFVGEISMYIMKSTGEALLAQEKTIVTGECCYLNPLIRRIIRFIGVFAFGLFATDIFVNAGQVVTGNLAPYFLNVCKPNYTGLDCHFSHQFIANGNICTGNQVVVERARRSFPSKDASLSVYSAVYVTMYITSTIKTKSSRLAKPVLCLGLLCAAFLTGLNRVSEYRNHCSDVVAGFILGSSIALFLGICVVNNFKGTHSTPTKQKQEDYRGLPLMTFPRVESPLETLSAQGKSCQATLLTSSQPNTWSA.

Helical transmembrane passes span 12 to 32 (IIPCFIFVELVIMAGTVLLAY), 66 to 86 (FIQPLILYCVVAAAPTAIIFV), and 126 to 146 (FIGVFAFGLFATDIFVNAGQV). N-linked (GlcNAc...) asparagine glycosylation occurs at N162. Helical transmembrane passes span 200–217 (ASLSVYSAVYVTMYITST), 223–243 (SRLAKPVLCLGLLCAAFLTGL), and 256–276 (VVAGFILGSSIALFLGICVVN).

This sequence belongs to the PA-phosphatase related phosphoesterase family.

It localises to the cell membrane. It is found in the cell projection. The protein localises to the neuron projection. May play a role in neurite outgrowth and neurogenesis. The protein is Phospholipid phosphatase-related protein type 1 (plppr1) of Danio rerio (Zebrafish).